The chain runs to 787 residues: Longitudinals lacking protein, isoforms A/B/D/L (787 aa).

One can recognise a BTB domain in the interval 32–97 (VDCTLAAEGK…MYRGEVNISQ (66 aa)). 4 disordered regions span residues 115–200 (LSDN…SSVL), 228–340 (SSGP…ASAS), 506–560 (AKDV…SGGK), and 653–677 (TTGS…SVLG). Low complexity-rich tracts occupy residues 162–175 (SGDV…SSSP), 228–251 (SSGP…LTST), 263–293 (TSST…QTTS), 329–340 (NSATGPNPASAS), 537–560 (HSSS…SGGK), and 659–668 (SPSNSGHNNS). The C2H2-type 1; degenerate zinc finger occupies 685–707 (HPCPVCGRVYKLKSSLRNHQKWE). Residues 714–737 (FQCPFCVYRAKQKMHIGRHMERMH) form a C2H2-type 2 zinc finger.

Isoform D interacts with JIL-1. By stage 11, isoform B is expressed throughout the mesoderm, whereas isoform A, isoform D and isoform L are expressed throughout the ectoderm. Expression becomes restricted during later stages; starting from stage 14 to 16, isoform B is expressed in muscle. Isoform A, isoform D, and at low levels isoform B, are expressed in the CNS. Expression is also seen in specific types of cells in the embryo; isoform A and isoform L are expressed in a dynamic pattern in the ventral neurogenic region starting at stage 7. Isoform L is expressed around the tracheal pits at stage 11.

It is found in the nucleus. Putative transcription factor required for axon growth and guidance in the central and peripheral nervous systems. Repels CNS axons away from the midline by promoting the expression of the midline repellent sli and its receptor robo. This Drosophila melanogaster (Fruit fly) protein is Longitudinals lacking protein, isoforms A/B/D/L.